Reading from the N-terminus, the 535-residue chain is Alpha-1,3-mannosyl-glycoprotein 4-beta-N-acetylglucosaminyltransferase A (535 aa).

The Cytoplasmic segment spans residues 1-4 (MRLR). Residues 5-27 (NGTVATALAFITSFLTLSWYTTW) traverse the membrane as a helical; Signal-anchor for type II membrane protein segment. Residues 28–63 (QNGKEKLIAYQREFLALKERLRIAEHRISQRSSELN) adopt a coiled-coil conformation. Over 28–535 (QNGKEKLIAY…NEIHIKKATN (508 aa)) the chain is Lumenal. 2 N-linked (GlcNAc...) asparagine glycosylation sites follow: N77 and N458. S474 is modified (phosphoserine).

This sequence belongs to the glycosyltransferase 54 family. A divalent metal cation is required as a cofactor. N-glycosylated.

It is found in the golgi apparatus membrane. The protein resides in the secreted. It catalyses the reaction N(4)-{beta-D-GlcNAc-(1-&gt;2)-alpha-D-Man-(1-&gt;3)-[beta-D-GlcNAc-(1-&gt;2)-alpha-D-Man-(1-&gt;6)]-beta-D-Man-(1-&gt;4)-beta-D-GlcNAc-(1-&gt;4)-beta-D-GlcNAc}-L-asparaginyl-[protein] + UDP-N-acetyl-alpha-D-glucosamine = N(4)-{beta-D-GlcNAc-(1-&gt;2)-[beta-D-GlcNAc-(1-&gt;4)]-alpha-D-Man-(1-&gt;3)-[beta-D-GlcNAc-(1-&gt;2)-alpha-D-Man-(1-&gt;6)]-beta-D-Man-(1-&gt;4)-beta-D-GlcNAc-(1-&gt;4)-beta-D-GlcNAc}-L-asparaginyl-[protein] + UDP + H(+). It carries out the reaction an N(4)-{beta-D-GlcNAc-(1-&gt;2)-alpha-D-Man-(1-&gt;3)-[alpha-D-Man-(1-&gt;6)]-beta-D-Man-(1-&gt;4)-beta-D-GlcNAc-(1-&gt;4)-beta-D-GlcNAc}-L-asparaginyl-[protein] + UDP-N-acetyl-alpha-D-glucosamine = an N(4)-{beta-D-GlcNAc-(1-&gt;2)-[beta-D-GlcNAc-(1-&gt;4)]-alpha-D-Man-(1-&gt;3)-[alpha-D-Man-(1-&gt;6)]-beta-D-Man-(1-&gt;4)-beta-D-GlcNAc-(1-&gt;4)-beta-D-GlcNAc}-L-asparaginyl-[protein] + UDP + H(+). The enzyme catalyses an N(4)-{beta-D-GlcNAc-(1-&gt;2)-alpha-D-Man-(1-&gt;3)-[beta-D-GlcNAc-(1-&gt;2)-[beta-D-GlcNAc-(1-&gt;6)]-alpha-D-Man-(1-&gt;6)]-beta-D-Man-(1-&gt;4)-beta-D-GlcNAc-(1-&gt;4)-beta-D-GlcNAc}-L-asparaginyl-[protein] + UDP-N-acetyl-alpha-D-glucosamine = an N(4)-{beta-D-GlcNAc-(1-&gt;2)-[beta-D-GlcNAc-(1-&gt;4)]-alpha-D-Man-(1-&gt;3)-[beta-D-GlcNAc-(1-&gt;2)-[beta-D-GlcNAc-(1-&gt;6)]-alpha-D-Man-(1-&gt;6)]-beta-D-Man-(1-&gt;4)-beta-D-GlcNAc-(1-&gt;4)-beta-D-GlcNAc}-L-asparaginyl-[protein] + UDP + H(+). The catalysed reaction is an N(4)-{beta-D-GlcNAc-(1-&gt;2)-alpha-D-Man-(1-&gt;3)-[beta-D-GlcNAc-(1-&gt;2)-alpha-D-Man-(1-&gt;6)]-beta-D-Man-(1-&gt;4)-beta-D-GlcNAc-(1-&gt;4)-[alpha-L-Fuc-(1-&gt;6)]-beta-D-GlcNAc}-L-asparaginyl-[protein] + UDP-N-acetyl-alpha-D-glucosamine = N(4)-{beta-D-GlcNAc-(1-&gt;2)-[beta-D-GlcNAc-(1-&gt;4)]-alpha-D-Man-(1-&gt;3)-[beta-D-GlcNAc-(1-&gt;2)-alpha-D-Man-(1-&gt;6)]-beta-D-Man-(1-&gt;4)-beta-D-GlcNAc-(1-&gt;4)-[alpha-L-Fuc-(1-&gt;6)]-beta-D-GlcNAc}-asparaginyl-[protein] + UDP + H(+). It catalyses the reaction an N(4)-{beta-D-GlcNAc-(1-&gt;2)-alpha-D-Man-(1-&gt;3)-[beta-D-Gal-(1-&gt;4)-beta-D-GlcNAc-(1-&gt;2)-alpha-D-Man-(1-&gt;6)]-beta-D-Man-(1-&gt;4)-beta-D-GlcNAc-(1-&gt;4)-beta-D-GlcNAc}-L-asparaginyl-[protein] + UDP-N-acetyl-alpha-D-glucosamine = an N(4)-{beta-D-GlcNAc-(1-&gt;2)-[beta-D-GlcNAc-(1-&gt;4)]-alpha-D-Man-(1-&gt;3)-[beta-D-Gal-(1-&gt;4)-beta-D-GlcNAc-(1-&gt;2)-alpha-D-Man-(1-&gt;6)]-beta-D-Man-(1-&gt;4)-beta-D-GlcNAc-(1-&gt;4)-beta-D-GlcNAc}-L-asparaginyl-[protein] + UDP + H(+). It carries out the reaction N(4)-{beta-D-GlcNAc-(1-&gt;2)-alpha-D-Man-(1-&gt;3)-[alpha-D-Man-(1-&gt;3)-{alpha-D-Man-(1-&gt;6)}-alpha-D-Man-(1-&gt;6)]-beta-D-Man-(1-&gt;4)-beta-D-GlcNAc-(1-&gt;4)-beta-D-GlcNAc}-asparaginyl-[protein] + UDP-N-acetyl-alpha-D-glucosamine = N(4)-{beta-D-GlcNAc-(1-&gt;2)-[beta-D-GlcNAc-(1-&gt;4)]-alpha-D-Man-(1-&gt;3)-[alpha-D-Man-(1-&gt;3)-{alpha-D-Man-(1-&gt;6)}-alpha-D-Man-(1-&gt;6)]-beta-D-Man-(1-&gt;4)-beta-D-GlcNAc-(1-&gt;4)-beta-D-GlcNAc}-asparaginyl-[protein] + UDP + H(+). The enzyme catalyses N(4)-{beta-D-GlcNAc-(1-&gt;2)-alpha-D-Man-(1-&gt;3)-beta-D-Man-(1-&gt;4)-beta-D-GlcNAc-(1-&gt;4)-beta-D-GlcNAc}-asparaginyl-[protein] + UDP-N-acetyl-alpha-D-glucosamine = N(4)-{beta-D-GlcNAc-(1-&gt;2)-[beta-D-GlcNAc-(1-&gt;4)]-alpha-D-Man-(1-&gt;3)-beta-D-Man-(1-&gt;4)-beta-D-GlcNAc-(1-&gt;4)-beta-D-GlcNAc}-asparaginyl-[protein] + UDP + H(+). It functions in the pathway protein modification; protein glycosylation. Its activity is regulated as follows. Inhibited by UDP. Glycosyltransferase that catalyze the transfer of GlcNAc from UDP-GlcNAc to the GlcNAcbeta1-2Manalpha1-3 arm of the core structure of N-linked glycans through a beta1-4 linkage and participates in the production of tri- and tetra-antennary N-linked sugar chains. Involved in glucose transport by mediating SLC2A2/GLUT2 glycosylation, thereby controlling cell-surface expression of SLC2A2 in pancreatic beta cells. In Pongo abelii (Sumatran orangutan), this protein is Alpha-1,3-mannosyl-glycoprotein 4-beta-N-acetylglucosaminyltransferase A.